Reading from the N-terminus, the 68-residue chain is Pleurocidin (68 aa).

An N-terminal signal peptide occupies residues 1–22 (MKFTATFLMMAIFVLMVEPGEC). A propeptide spanning residues 48-68 (GDKQELNKRAVDEDPNVIVFE) is cleaved from the precursor.

It belongs to the pleurocidin family. Goblet cells.

Its subcellular location is the secreted. It is found in the membrane. Functionally, antimicrobial peptide with potent activity against Gram-positive and Gram-negative bacteria. Activity against E.coli and B.subtilis. Weaker activity against L.mucor, s.marcescens and P.aeruginosa. May play a role in innate host defense. The protein is Pleurocidin (ple1) of Pseudopleuronectes americanus (Winter flounder).